Reading from the N-terminus, the 484-residue chain is Magnesium transporter MRS2-3 (484 aa).

2 disordered regions span residues 1–40 (MRGA…GRKK) and 141–186 (TKPQ…QSLE). Residues 10–24 (NFSTNPSTPNTGQPT) are compositionally biased toward polar residues. Residues 203 to 275 (ACLEAASSSL…LLDDDEDMAE (73 aa)) adopt a coiled-coil conformation. A disordered region spans residues 286-320 (LEDSSNSSMNESDTFEVDLPQGDEDDRLPPEFASE). The span at 298–311 (DTFEVDLPQGDEDD) shows a compositional bias: acidic residues. Residues 416-436 (GVMLTTATLVMSAFIAVAGVF) form a helical membrane-spanning segment. Positions 437 to 439 (GMN) match the Required for magnesium transport activity motif. A helical transmembrane segment spans residues 455–475 (FIWTVIGGSIGSICLYVGAIG).

This sequence belongs to the CorA metal ion transporter (MIT) (TC 1.A.35.5) family. In terms of tissue distribution, expressed in the whole plant.

It localises to the membrane. In terms of biological role, magnesium transporter that may mediate the influx of magnesium. In Arabidopsis thaliana (Mouse-ear cress), this protein is Magnesium transporter MRS2-3 (MRS2-3).